The sequence spans 1454 residues: Alpha-2-macroglobulin-like protein 1 (1454 aa).

A signal peptide spans methionine 1–alanine 17. Cysteine 40 and cysteine 78 are joined by a disulfide. An N-linked (GlcNAc...) asparagine glycan is attached at asparagine 120. 2 disulfides stabilise this stretch: cysteine 241-cysteine 291 and cysteine 259-cysteine 279. Residues asparagine 281 and asparagine 409 are each glycosylated (N-linked (GlcNAc...) asparagine). Intrachain disulfides connect cysteine 464/cysteine 557, cysteine 589/cysteine 769, cysteine 819/cysteine 847, cysteine 845/cysteine 881, cysteine 919/cysteine 1307, cysteine 1075/cysteine 1123, and cysteine 1338/cysteine 1453. Residues serine 695–aspartate 726 are bait region. N-linked (GlcNAc...) asparagine glycosylation occurs at asparagine 857. A cross-link (isoglutamyl cysteine thioester (Cys-Gln)) is located at residues cysteine 970–glutamine 973. Asparagine 1020 carries N-linked (GlcNAc...) asparagine glycosylation.

Belongs to the protease inhibitor I39 (alpha-2-macroglobulin) family. Monomer. In the epidermis, expressed predominantly in the granular layer at the apical edge of keratinocytes (at protein level). Also detected in placenta, testis and thymus but not in epithelia of kidney, lung, small intestine or colon.

Its subcellular location is the secreted. In terms of biological role, is able to inhibit all four classes of proteinases by a unique 'trapping' mechanism. This protein has a peptide stretch, called the 'bait region' which contains specific cleavage sites for different proteinases. When a proteinase cleaves the bait region, a conformational change is induced in the protein which traps the proteinase. The entrapped enzyme remains active against low molecular weight substrates (activity against high molecular weight substrates is greatly reduced). Following cleavage in the bait region a thioester bond is hydrolyzed and mediates the covalent binding of the protein to the proteinase. Displays inhibitory activity against chymotrypsin, papain, thermolysin, subtilisin A and, to a lesser extent, elastase but not trypsin. May play an important role during desquamation by inhibiting extracellular proteases. The protein is Alpha-2-macroglobulin-like protein 1 of Homo sapiens (Human).